Consider the following 75-residue polypeptide: Nigwaprin-a (75 aa).

Residues 1-24 (MSSGGLLLLLGLLTLWAELTPVSG) form the signal peptide. The WAP domain maps to 27–72 (RPVKPGLCPPRPQKPPCVKECKNDWSCRGEQKCCRYGCIYECRDPI). Disulfide bonds link Cys34-Cys60, Cys43-Cys64, Cys47-Cys59, and Cys53-Cys68.

Belongs to the venom waprin family. Expressed by the venom gland.

It is found in the secreted. Functionally, damages membranes of susceptible bacteria. Has no hemolytic activity. Not toxic to mice. Does not inhibit the proteinases elastase and cathepsin G. The protein is Nigwaprin-a of Cryptophis nigrescens (Eastern small-eyed snake).